We begin with the raw amino-acid sequence, 402 residues long: Propionate kinase (402 aa).

The ATP site is built by asparagine 11 and lysine 18. Asparagine 11 contributes to the Mg(2+) binding site. Substrate is bound at residue arginine 86. The Proton donor/acceptor role is filled by aspartate 143. ATP-binding positions include histidine 175, 203-207 (HLGNG), 278-280 (DLR), and 326-330 (GIGEN).

This sequence belongs to the acetokinase family. TdcD subfamily. In terms of assembly, homodimer. It depends on Mg(2+) as a cofactor.

It carries out the reaction propanoate + ATP = propanoyl phosphate + ADP. Its pathway is amino-acid degradation; L-threonine degradation via propanoate pathway; propanoate from L-threonine: step 4/4. Its function is as follows. Catalyzes the conversion of propionyl phosphate and ADP to propionate and ATP. This is Propionate kinase from Salmonella typhimurium (strain D23580).